The sequence spans 296 residues: Formamidopyrimidine-DNA glycosylase (296 aa).

Catalysis depends on Pro2, which acts as the Schiff-base intermediate with DNA. Glu3 (proton donor) is an active-site residue. The active-site Proton donor; for beta-elimination activity is the Lys61. 3 residues coordinate DNA: His104, Arg128, and Lys174. Residues 260–294 (HAYGQQGQACDRCGSNIIREKFANRSSHFCPRCQL) form an FPG-type zinc finger. Residue Arg284 is the Proton donor; for delta-elimination activity of the active site.

It belongs to the FPG family. As to quaternary structure, monomer. It depends on Zn(2+) as a cofactor.

It catalyses the reaction Hydrolysis of DNA containing ring-opened 7-methylguanine residues, releasing 2,6-diamino-4-hydroxy-5-(N-methyl)formamidopyrimidine.. The catalysed reaction is 2'-deoxyribonucleotide-(2'-deoxyribose 5'-phosphate)-2'-deoxyribonucleotide-DNA = a 3'-end 2'-deoxyribonucleotide-(2,3-dehydro-2,3-deoxyribose 5'-phosphate)-DNA + a 5'-end 5'-phospho-2'-deoxyribonucleoside-DNA + H(+). Involved in base excision repair of DNA damaged by oxidation or by mutagenic agents. Acts as a DNA glycosylase that recognizes and removes damaged bases. Has a preference for oxidized purines, such as 7,8-dihydro-8-oxoguanine (8-oxoG). Has AP (apurinic/apyrimidinic) lyase activity and introduces nicks in the DNA strand. Cleaves the DNA backbone by beta-delta elimination to generate a single-strand break at the site of the removed base with both 3'- and 5'-phosphates. The polypeptide is Formamidopyrimidine-DNA glycosylase (Corynebacterium diphtheriae (strain ATCC 700971 / NCTC 13129 / Biotype gravis)).